Consider the following 235-residue polypeptide: Secretory carrier-associated membrane protein 5A (235 aa).

Over 1–39 (MSDKPNNFPPLPRFIPLKPCFYQDFDTDIPDLHRTTAKR) the chain is Cytoplasmic. The chain crosses the membrane as a helical span at residues 40 to 60 (LYYLWMLNSITLGVNLIGCLA). Residues 61 to 67 (WLIGGGS) lie on the Extracellular side of the membrane. A helical membrane pass occupies residues 68–88 (ATNFGLAFLWLILFTPCSYVC). The Cytoplasmic portion of the chain corresponds to 89-102 (WFRPIYKAFKTDSS). Residues 103–125 (FNFMAFFFTFTAQLVISIIQAVG) traverse the membrane as a helical segment. Residues 126-148 (IPGWGVCGWIASISFFGTNVGSA) are Extracellular-facing. The chain crosses the membrane as a helical span at residues 149–169 (VVMLIPTIMFTAVAVLSFVAL). At 170-235 (TKVHRFYRGA…TPNYGYSNEM (66 aa)) the chain is on the cytoplasmic side.

Belongs to the SCAMP family. SCAMP5 subfamily.

It localises to the cell membrane. The protein resides in the golgi apparatus membrane. Its subcellular location is the golgi apparatus. The protein localises to the trans-Golgi network membrane. It is found in the recycling endosome membrane. It localises to the cytoplasmic vesicle. The protein resides in the secretory vesicle. Its subcellular location is the synaptic vesicle membrane. Required for the calcium-dependent exocytosis of signal sequence-containing cytokines. Probably acts in cooperation with the SNARE machinery. This Xenopus laevis (African clawed frog) protein is Secretory carrier-associated membrane protein 5A (scamp5-a).